The following is a 467-amino-acid chain: tRNA modification GTPase MnmE (467 aa).

Arg-25, Glu-87, and Lys-130 together coordinate (6S)-5-formyl-5,6,7,8-tetrahydrofolate. The TrmE-type G domain occupies 226–389 (GLSVVLAGQP…LRGELLRIAG (164 aa)). Asn-236 provides a ligand contact to K(+). GTP-binding positions include 236 to 241 (NVGKSS), 255 to 261 (TPIAGTT), and 280 to 283 (DTAG). Ser-240 is a binding site for Mg(2+). 3 residues coordinate K(+): Thr-255, Ile-257, and Thr-260. Thr-261 provides a ligand contact to Mg(2+). Lys-467 contacts (6S)-5-formyl-5,6,7,8-tetrahydrofolate.

It belongs to the TRAFAC class TrmE-Era-EngA-EngB-Septin-like GTPase superfamily. TrmE GTPase family. In terms of assembly, homodimer. Heterotetramer of two MnmE and two MnmG subunits. Requires K(+) as cofactor.

The protein resides in the cytoplasm. Exhibits a very high intrinsic GTPase hydrolysis rate. Involved in the addition of a carboxymethylaminomethyl (cmnm) group at the wobble position (U34) of certain tRNAs, forming tRNA-cmnm(5)s(2)U34. The sequence is that of tRNA modification GTPase MnmE from Burkholderia thailandensis (strain ATCC 700388 / DSM 13276 / CCUG 48851 / CIP 106301 / E264).